Consider the following 213-residue polypeptide: G2/mitotic-specific cyclin-1 (213 aa).

The interval 1 to 23 is disordered; it reads MKFSEEKNVSNNPTNFEGGLDSR.

This sequence belongs to the cyclin family. Cyclin AB subfamily. As to quaternary structure, interacts with the CDC2 protein kinase to form a serine/threonine kinase holoenzyme complex also known as maturation promoting factor (MPF). The cyclin subunit imparts substrate specificity to the complex. As to expression, only expressed in organs with dividing cells.

In terms of biological role, essential for the control of the cell cycle at the G2/M (mitosis) transition. This is G2/mitotic-specific cyclin-1 from Medicago sativa (Alfalfa).